The following is a 1543-amino-acid chain: DNA-directed RNA polymerase subunit beta' (1543 aa).

Cys60, Cys62, Cys75, and Cys78 together coordinate Zn(2+). Residues Asp627, Asp629, and Asp631 each coordinate Mg(2+). Zn(2+)-binding residues include Cys1017, Cys1097, Cys1104, and Cys1107. 2 disordered regions span residues 1466–1490 and 1522–1543; these read PADR…APPR and AEEG…EENV.

The protein belongs to the RNA polymerase beta' chain family. The RNAP catalytic core consists of 2 alpha, 1 beta, 1 beta' and 1 omega subunit. When a sigma factor is associated with the core the holoenzyme is formed, which can initiate transcription. The cofactor is Mg(2+). Requires Zn(2+) as cofactor.

The enzyme catalyses RNA(n) + a ribonucleoside 5'-triphosphate = RNA(n+1) + diphosphate. DNA-dependent RNA polymerase catalyzes the transcription of DNA into RNA using the four ribonucleoside triphosphates as substrates. The protein is DNA-directed RNA polymerase subunit beta' of Herpetosiphon aurantiacus (strain ATCC 23779 / DSM 785 / 114-95).